We begin with the raw amino-acid sequence, 399 residues long: Elongation factor Tu (399 aa).

The region spanning Lys-10 to Glu-204 is the tr-type G domain. Residues Gly-19–Thr-26 form a G1 region. Gly-19–Thr-26 contacts GTP. Thr-26 is a binding site for Mg(2+). Positions Gly-60–Asn-64 are G2. A G3 region spans residues Asp-81–Gly-84. GTP-binding positions include Asp-81–His-85 and Asn-136–Asp-139. The segment at Asn-136–Asp-139 is G4. Positions Ser-174–Leu-176 are G5.

The protein belongs to the TRAFAC class translation factor GTPase superfamily. Classic translation factor GTPase family. EF-Tu/EF-1A subfamily. As to quaternary structure, monomer.

It localises to the cytoplasm. The enzyme catalyses GTP + H2O = GDP + phosphate + H(+). GTP hydrolase that promotes the GTP-dependent binding of aminoacyl-tRNA to the A-site of ribosomes during protein biosynthesis. This Prochlorococcus marinus subsp. pastoris (strain CCMP1986 / NIES-2087 / MED4) protein is Elongation factor Tu.